A 523-amino-acid polypeptide reads, in one-letter code: GMP synthase [glutamine-hydrolyzing] (523 aa).

The 198-residue stretch at 8–205 folds into the Glutamine amidotransferase type-1 domain; that stretch reads KILILDFGSQ…VVNICGCTTN (198 aa). The active-site Nucleophile is the Cys85. Residues His179 and Glu181 contribute to the active site. The 193-residue stretch at 206 to 398 folds into the GMPS ATP-PPase domain; that stretch reads WTPENIIEDA…LGLPAEMLNR (193 aa). Residue 233 to 239 participates in ATP binding; that stretch reads SGGVDSS.

In terms of assembly, homodimer.

The enzyme catalyses XMP + L-glutamine + ATP + H2O = GMP + L-glutamate + AMP + diphosphate + 2 H(+). The protein operates within purine metabolism; GMP biosynthesis; GMP from XMP (L-Gln route): step 1/1. In terms of biological role, catalyzes the synthesis of GMP from XMP. The sequence is that of GMP synthase [glutamine-hydrolyzing] from Mannheimia succiniciproducens (strain KCTC 0769BP / MBEL55E).